A 447-amino-acid chain; its full sequence is Phosphoglucosamine mutase (447 aa).

Catalysis depends on S100, which acts as the Phosphoserine intermediate. Mg(2+)-binding residues include S100, D239, D241, and D243. S100 carries the post-translational modification Phosphoserine.

Belongs to the phosphohexose mutase family. Requires Mg(2+) as cofactor. In terms of processing, activated by phosphorylation.

It carries out the reaction alpha-D-glucosamine 1-phosphate = D-glucosamine 6-phosphate. Catalyzes the conversion of glucosamine-6-phosphate to glucosamine-1-phosphate. The sequence is that of Phosphoglucosamine mutase from Thermoanaerobacter pseudethanolicus (strain ATCC 33223 / 39E) (Clostridium thermohydrosulfuricum).